The following is a 373-amino-acid chain: Maltose/maltodextrin import ATP-binding protein MalK (373 aa).

An ABC transporter domain is found at 4–234; the sequence is VTLKNVCKAY…PQNRFVAGFI (231 aa). 36-43 lines the ATP pocket; it reads GPSGCGKS.

This sequence belongs to the ABC transporter superfamily. Maltooligosaccharide importer (TC 3.A.1.1.1) family. As to quaternary structure, the complex is composed of two ATP-binding proteins (MalK), two transmembrane proteins (MalG and MalK) and a solute-binding protein (MalE).

It is found in the cell inner membrane. It catalyses the reaction D-maltose(out) + ATP + H2O = D-maltose(in) + ADP + phosphate + H(+). Its function is as follows. Part of the ABC transporter complex MalEFGK involved in maltose/maltodextrin import. Responsible for energy coupling to the transport system. This is Maltose/maltodextrin import ATP-binding protein MalK from Vibrio cholerae serotype O1 (strain ATCC 39315 / El Tor Inaba N16961).